Consider the following 997-residue polypeptide: FHIP family protein CPIJ015043 (997 aa).

Disordered regions lie at residues 558-579 and 759-922; these read DHRS…QQLQ and NVVL…GGAA. Residues 569–579 show a composition bias toward low complexity; that stretch reads QQHLHQQQQLQ. The span at 763-780 shows a compositional bias: gly residues; it reads GGSGPGGPRLSNGGGGTG. Low complexity-rich tracts occupy residues 781-792 and 830-889; these read SSITSSLSQTTP and GSNS…MVGS. Over residues 911–922 the composition is skewed to gly residues; sequence IGSGTVGGGGAA.

Belongs to the FHIP family.

The chain is FHIP family protein CPIJ015043 from Culex quinquefasciatus (Southern house mosquito).